The following is a 504-amino-acid chain: Cytochrome P450 2D10 (504 aa).

O-linked (GlcNAc) serine glycosylation occurs at Ser382. Cys446 contacts heme.

It belongs to the cytochrome P450 family. Heme is required as a cofactor.

It localises to the endoplasmic reticulum membrane. The protein localises to the microsome membrane. It carries out the reaction an organic molecule + reduced [NADPH--hemoprotein reductase] + O2 = an alcohol + oxidized [NADPH--hemoprotein reductase] + H2O + H(+). Functionally, cytochromes P450 are a group of heme-thiolate monooxygenases. In liver microsomes, this enzyme is involved in an NADPH-dependent electron transport pathway. It oxidizes a variety of structurally unrelated compounds, including steroids, fatty acids, and xenobiotics. The sequence is that of Cytochrome P450 2D10 (Cyp2d10) from Rattus norvegicus (Rat).